The chain runs to 221 residues: Iron-sulfur cluster repair protein YtfE (221 aa).

This sequence belongs to the RIC family. YtfE subfamily. As to quaternary structure, homodimer.

It is found in the cytoplasm. In terms of biological role, di-iron-containing protein involved in the repair of iron-sulfur clusters damaged by oxidative and nitrosative stress conditions. The protein is Iron-sulfur cluster repair protein YtfE of Yersinia pseudotuberculosis serotype IB (strain PB1/+).